The following is a 443-amino-acid chain: Threonine/serine transporter TdcC (443 aa).

The next 11 helical transmembrane spans lie at 22 to 42, 44 to 64, 97 to 117, 140 to 160, 163 to 183, 207 to 227, 259 to 279, 319 to 339, 366 to 386, 389 to 409, and 423 to 443; these read TTWTLGLFGTAIGAGVLFFPI, AGFGGLIPILLMLVLAYPIAF, GVVITFLYFFAICPLLWIYGV, FVALFLLLLMAFVIWFGKDLM, VMSYLVWPFIASLVLISLSLI, ILVTVWLGISIMVFSFNFSPI, ASMLMVAVVMFFAFSCLFTLS, ASIIALVAIFKSFFGHYLGTL, ISMIFIMGSTWVVAYANPNIL, IEAMGAPIIASLLCLLPMYAI, and DNVFVTLIGLLTILNIVYKLF.

It belongs to the amino acid/polyamine transporter 2 family. SdaC/TdcC subfamily.

The protein localises to the cell inner membrane. It carries out the reaction L-threonine(in) + H(+)(in) = L-threonine(out) + H(+)(out). It catalyses the reaction L-serine(in) + H(+)(in) = L-serine(out) + H(+)(out). Functionally, involved in the import of threonine and serine into the cell, with the concomitant import of a proton (symport system). The protein is Threonine/serine transporter TdcC of Salmonella paratyphi B (strain ATCC BAA-1250 / SPB7).